The chain runs to 31 residues: Dermaseptin-7.2TR (31 aa).

The residue at position 31 (Glu31) is a Glutamic acid 1-amide.

As to expression, expressed by the skin glands.

The protein localises to the secreted. Its function is as follows. Has antimicrobial activity. This is Dermaseptin-7.2TR from Phyllomedusa trinitatis (Trinidad leaf frog).